Here is a 365-residue protein sequence, read N- to C-terminus: GDSL esterase/lipase At3g62280 (365 aa).

An N-terminal signal peptide occupies residues 1–25 (MDYTVSSLQCFFLVLCLSLLVCSNS). The Nucleophile role is filled by S43. 3 N-linked (GlcNAc...) asparagine glycosylation sites follow: N137, N178, and N231. Active-site residues include D333 and H336.

This sequence belongs to the 'GDSL' lipolytic enzyme family.

Its subcellular location is the secreted. The sequence is that of GDSL esterase/lipase At3g62280 from Arabidopsis thaliana (Mouse-ear cress).